Here is a 437-residue protein sequence, read N- to C-terminus: Sonic hedgehog protein (437 aa).

The signal sequence occupies residues 1 to 24 (MLLLLARCFLVILASSLLVCPGLA). C25 carries the N-palmitoyl cysteine lipid modification. The Cardin-Weintraub motif lies at 33–39 (KRRHPKK). Residues E90, E91, D96, T126, E127, D130, and D132 each coordinate Ca(2+). Zn(2+) is bound by residues H141, D148, and H183. G198 carries Cholesterol glycine ester lipidation. N279 carries an N-linked (GlcNAc...) asparagine glycan.

Belongs to the hedgehog family. Interacts with HHATL/GUP1 which negatively regulates HHAT-mediated palmitoylation of the SHH N-terminus. Interacts with BOC and CDON. Interacts with HHIP. Interacts with DISP1 via its cholesterol anchor. Interacts with SCUBE2. Interacts with glypican GPC3. In terms of assembly, multimer. In terms of processing, the C-terminal domain displays an autoproteolysis activity and a cholesterol transferase activity. Both activities result in the cleavage of the full-length protein and covalent attachment of a cholesterol moiety to the C-terminal of the newly generated N-terminal fragment (ShhN). Cholesterylation is required for the sonic hedgehog protein N-product targeting to lipid rafts and multimerization. ShhN is the active species in both local and long-range signaling, whereas the C-product (ShhC) is degraded in the endoplasmic reticulum. N-palmitoylation by HHAT of ShhN is required for sonic hedgehog protein N-product multimerization and full activity. It is a prerequisite for the membrane-proximal positioning and the subsequent shedding of this N-terminal peptide. Post-translationally, the lipidated N- and C-terminal peptides of ShhNp can be cleaved (shedding). The N-terminal palmitoylated peptide is cleaved at the Cardin-Weintraub (CW) motif site. The cleavage reduced the interactions with heparan sulfate. The cleavage is enhanced by SCUBE2. Expressed in a number of embryonic tissues including the notochord, ventral neural tube, floor plate, lung bud, zone of polarizing activity and posterior distal mesenchyme of limbs. In the adult, expressed in lung and neural retina.

The protein resides in the endoplasmic reticulum membrane. It localises to the golgi apparatus membrane. Its subcellular location is the cell membrane. It catalyses the reaction glycyl-L-cysteinyl-[protein] + cholesterol + H(+) = [protein]-C-terminal glycyl cholesterol ester + N-terminal L-cysteinyl-[protein]. Its function is as follows. The C-terminal part of the sonic hedgehog protein precursor displays an autoproteolysis and a cholesterol transferase activity. Both activities result in the cleavage of the full-length protein into two parts (ShhN and ShhC) followed by the covalent attachment of a cholesterol moiety to the C-terminal of the newly generated ShhN. Both activities occur in the reticulum endoplasmic. Once cleaved, ShhC is degraded in the endoplasmic reticulum. Functionally, the dually lipidated sonic hedgehog protein N-product (ShhNp) is a morphogen which is essential for a variety of patterning events during development. Induces ventral cell fate in the neural tube and somites. Involved in the patterning of the anterior-posterior axis of the developing limb bud. Essential for axon guidance. Binds to the patched (PTCH1) receptor, which functions in association with smoothened (SMO), to activate the transcription of target genes. In the absence of SHH, PTCH1 represses the constitutive signaling activity of SMO. This is Sonic hedgehog protein from Mus musculus (Mouse).